The sequence spans 137 residues: Nucleoside diphosphate kinase (137 aa).

ATP is bound by residues K9, F57, R85, T91, R102, and N112. Residue H115 is the Pros-phosphohistidine intermediate of the active site.

This sequence belongs to the NDK family. As to quaternary structure, homotetramer. Mg(2+) is required as a cofactor.

The protein localises to the cytoplasm. The catalysed reaction is a 2'-deoxyribonucleoside 5'-diphosphate + ATP = a 2'-deoxyribonucleoside 5'-triphosphate + ADP. It catalyses the reaction a ribonucleoside 5'-diphosphate + ATP = a ribonucleoside 5'-triphosphate + ADP. In terms of biological role, major role in the synthesis of nucleoside triphosphates other than ATP. The ATP gamma phosphate is transferred to the NDP beta phosphate via a ping-pong mechanism, using a phosphorylated active-site intermediate. This is Nucleoside diphosphate kinase from Campylobacter fetus subsp. fetus (strain 82-40).